Here is a 434-residue protein sequence, read N- to C-terminus: Glycoprotein U20 (434 aa).

The first 15 residues, 1–15, serve as a signal peptide directing secretion; that stretch reads MITVFVACLFQCVSS. Residues 322–342 form a helical membrane-spanning segment; the sequence is LLWIFIVIPIAAGCMFLYILT.

The protein localises to the host endoplasmic reticulum membrane. The protein resides in the host lysosome membrane. Functionally, plays a role in the down-regulation of the host stress-induced NKG2D ligand UBPL1, which enables immune cells expressing the NKG2D receptor to recognize and annihilate infected cells prior to viral spread. This is Glycoprotein U20 (U20) from Human herpesvirus 6B (strain Z29) (HHV-6 variant B).